The following is a 141-amino-acid chain: Large ribosomal subunit protein uL11 (141 aa).

Belongs to the universal ribosomal protein uL11 family. In terms of assembly, part of the ribosomal stalk of the 50S ribosomal subunit. Interacts with L10 and the large rRNA to form the base of the stalk. L10 forms an elongated spine to which L12 dimers bind in a sequential fashion forming a multimeric L10(L12)X complex. One or more lysine residues are methylated.

Functionally, forms part of the ribosomal stalk which helps the ribosome interact with GTP-bound translation factors. The sequence is that of Large ribosomal subunit protein uL11 from Ruegeria sp. (strain TM1040) (Silicibacter sp.).